A 362-amino-acid chain; its full sequence is Chorismate synthase (362 aa).

NADP(+) is bound at residue Arg47. Residues 124–126 (RSS), Gly286, 301–305 (KPTAT), and Arg327 each bind FMN.

This sequence belongs to the chorismate synthase family. In terms of assembly, homotetramer. FMNH2 is required as a cofactor.

It catalyses the reaction 5-O-(1-carboxyvinyl)-3-phosphoshikimate = chorismate + phosphate. It functions in the pathway metabolic intermediate biosynthesis; chorismate biosynthesis; chorismate from D-erythrose 4-phosphate and phosphoenolpyruvate: step 7/7. Its function is as follows. Catalyzes the anti-1,4-elimination of the C-3 phosphate and the C-6 proR hydrogen from 5-enolpyruvylshikimate-3-phosphate (EPSP) to yield chorismate, which is the branch point compound that serves as the starting substrate for the three terminal pathways of aromatic amino acid biosynthesis. This reaction introduces a second double bond into the aromatic ring system. This chain is Chorismate synthase, found in Nostoc punctiforme (strain ATCC 29133 / PCC 73102).